The sequence spans 329 residues: Mitochondrial glycine transporter (329 aa).

Solcar repeat units follow at residues 19-103, 130-214, and 232-316; these read SKTT…LRQP, LSNW…LKRH, and SSSS…LILR. 6 helical membrane passes run 25–50, 78–104, 136–161, 189–212, 236–262, and 291–309; these read FAAGLCSGLTSSILLQPADLLKTRVQ, GTLPSALRTGFGSALYFTTLNALRQPL, LGTGAVARVAAGFVMMPVTVIKVRYE, GFGATAARDAPYAGLYVLFYEQLK, INFISGGLAAGLATTITNPFDAVKTRL, and GLGLRITRKALSSALAWTV.

This sequence belongs to the mitochondrial carrier (TC 2.A.29) family. SLC25A38 subfamily.

The protein resides in the mitochondrion inner membrane. It carries out the reaction glycine(in) = glycine(out). Functionally, mitochondrial glycine transporter that imports glycine into the mitochondrial matrix. Plays an important role in providing glycine for the first enzymatic step in heme biosynthesis, the condensation of glycine with succinyl-CoA to produce 5-aminolevulinate (ALA) in the mitochondrial matrix. The polypeptide is Mitochondrial glycine transporter (Aspergillus terreus (strain NIH 2624 / FGSC A1156)).